A 172-amino-acid polypeptide reads, in one-letter code: Protein-export protein SecB (172 aa).

The tract at residues 153 to 172 (AQGQGGDSGIVMPDGSQARH) is disordered.

Belongs to the SecB family. In terms of assembly, homotetramer, a dimer of dimers. One homotetramer interacts with 1 SecA dimer.

Its subcellular location is the cytoplasm. In terms of biological role, one of the proteins required for the normal export of preproteins out of the cell cytoplasm. It is a molecular chaperone that binds to a subset of precursor proteins, maintaining them in a translocation-competent state. It also specifically binds to its receptor SecA. This is Protein-export protein SecB from Cupriavidus metallidurans (strain ATCC 43123 / DSM 2839 / NBRC 102507 / CH34) (Ralstonia metallidurans).